The sequence spans 574 residues: Splicing factor U2af large subunit A (574 aa).

Residues 1 to 180 (MAEHEEQPYE…SKRVSGFDQG (180 aa)) form a disordered region. The segment covering 18-41 (PAPASAYAEYPAPEGSPPAAAAKP) has biased composition (low complexity). Basic and acidic residues predominate over residues 53-143 (RSQHETQPHD…ERRRDRDRDG (91 aa)). Over residues 144 to 172 (HRRHRSRSRSPSKGRDRRSRSRSRSRSSK) the composition is skewed to basic residues. 3 RRM domains span residues 238-321 (RRVY…RPTD), 358-436 (DRIF…RANQ), and 479-565 (QVVS…YPED).

It belongs to the splicing factor SR family.

The protein localises to the nucleus. Functionally, necessary for the splicing of pre-mRNA. This Oryza sativa subsp. japonica (Rice) protein is Splicing factor U2af large subunit A (U2AF65A).